The chain runs to 350 residues: 2-oxoglutarate and iron-dependent oxygenase domain-containing protein 2 (350 aa).

The 95-residue stretch at 215–309 (DSHRAFVVKY…RWNLVVWLRA (95 aa)) folds into the Fe2OG dioxygenase domain. H235, D237, and H290 together coordinate Fe cation. Position 300 (R300) interacts with 2-oxoglutarate.

This sequence belongs to the OGFOD2 family. It depends on Fe(2+) as a cofactor. Requires L-ascorbate as cofactor.

The protein is 2-oxoglutarate and iron-dependent oxygenase domain-containing protein 2 (OGFOD2) of Homo sapiens (Human).